The primary structure comprises 166 residues: MTIAVCPGSYDPVTAGHLDVIERSARFFDEVHVVVAVNAAKTPMFSEATRVDVIRRALDKAGCKNVTVSSTDGLITDYCKKVGATVIIKGLRQNGDYEAELGMALVNRKLAGIETLFLPADPILEHISSSIVKDVARHGGDVTGMVPDCVVPMLADALAEERQRKD.

S9 is a binding site for substrate. Residues 9–10 (SY) and H17 contribute to the ATP site. The substrate site is built by K41, I75, and K89. Residues 90–92 (GLR), E100, and 124–130 (LEHISSS) contribute to the ATP site.

Belongs to the bacterial CoaD family. Homohexamer. It depends on Mg(2+) as a cofactor.

It localises to the cytoplasm. The catalysed reaction is (R)-4'-phosphopantetheine + ATP + H(+) = 3'-dephospho-CoA + diphosphate. The protein operates within cofactor biosynthesis; coenzyme A biosynthesis; CoA from (R)-pantothenate: step 4/5. In terms of biological role, reversibly transfers an adenylyl group from ATP to 4'-phosphopantetheine, yielding dephospho-CoA (dPCoA) and pyrophosphate. This is Phosphopantetheine adenylyltransferase from Bifidobacterium longum (strain DJO10A).